Reading from the N-terminus, the 424-residue chain is Carbohydrate sulfotransferase 8 (424 aa).

Residues 1–10 are Cytoplasmic-facing; the sequence is MTLRPGTMRL. The chain crosses the membrane as a helical; Signal-anchor for type II membrane protein span at residues 11–31; the sequence is ACMFSSILLFGAAGLLLFISL. The Lumenal segment spans residues 32-424; it reads QDPTELAPQQ…NYSKPFADLY (393 aa). Positions 47-107 are disordered; that stretch reads FNIRPRQPHH…PLQRGTRLRL (61 aa). Residues 66-77 show a composition bias toward basic and acidic residues; that stretch reads GDLKEPTERVTR. Asparagine 128 carries an N-linked (GlcNAc...) asparagine glycan. 3'-phosphoadenylyl sulfate-binding positions include 198–204 and 258–266; these read PKAGCSN and REPFERLVS. Asparagine 294, asparagine 367, and asparagine 415 each carry an N-linked (GlcNAc...) asparagine glycan.

This sequence belongs to the sulfotransferase 2 family. In terms of tissue distribution, predominantly expressed in pituitary gland. In brain, it is expressed in pituitary gland, cerebellum, medulla oblongata, pons, thalamus and spinal cord. Expressed in the epidermis. Expressed at lower level in lung, spleen, adrenal gland, placenta, prostate, testis, mammary gland and trachea.

It is found in the golgi apparatus membrane. Functionally, catalyzes the transfer of sulfate to position 4 of non-reducing N-acetylgalactosamine (GalNAc) residues in both N-glycans and O-glycans. Required for biosynthesis of glycoprotein hormones lutropin and thyrotropin, by mediating sulfation of their carbohydrate structures. Only active against terminal GalNAcbeta1,GalNAcbeta. Not active toward chondroitin. The protein is Carbohydrate sulfotransferase 8 (CHST8) of Homo sapiens (Human).